Reading from the N-terminus, the 471-residue chain is Siroheme synthase (471 aa).

The interval 1 to 203 (MDYLPLFADI…GDWESAEKTL (203 aa)) is precorrin-2 dehydrogenase /sirohydrochlorin ferrochelatase. NAD(+) is bound by residues 22–23 (EV) and 43–44 (KN). S128 carries the post-translational modification Phosphoserine. Positions 215-471 (GEIILVGAGP…DTKSSLINLA (257 aa)) are uroporphyrinogen-III C-methyltransferase. P224 is an S-adenosyl-L-methionine binding site. D247 (proton acceptor) is an active-site residue. Residue K269 is the Proton donor of the active site. S-adenosyl-L-methionine is bound by residues 300 to 302 (GGD), I305, 330 to 331 (TA), M382, and A411.

This sequence in the N-terminal section; belongs to the precorrin-2 dehydrogenase / sirohydrochlorin ferrochelatase family. The protein in the C-terminal section; belongs to the precorrin methyltransferase family.

It catalyses the reaction uroporphyrinogen III + 2 S-adenosyl-L-methionine = precorrin-2 + 2 S-adenosyl-L-homocysteine + H(+). The catalysed reaction is precorrin-2 + NAD(+) = sirohydrochlorin + NADH + 2 H(+). The enzyme catalyses siroheme + 2 H(+) = sirohydrochlorin + Fe(2+). Its pathway is cofactor biosynthesis; adenosylcobalamin biosynthesis; precorrin-2 from uroporphyrinogen III: step 1/1. The protein operates within cofactor biosynthesis; adenosylcobalamin biosynthesis; sirohydrochlorin from precorrin-2: step 1/1. It participates in porphyrin-containing compound metabolism; siroheme biosynthesis; precorrin-2 from uroporphyrinogen III: step 1/1. It functions in the pathway porphyrin-containing compound metabolism; siroheme biosynthesis; siroheme from sirohydrochlorin: step 1/1. Its pathway is porphyrin-containing compound metabolism; siroheme biosynthesis; sirohydrochlorin from precorrin-2: step 1/1. In terms of biological role, multifunctional enzyme that catalyzes the SAM-dependent methylations of uroporphyrinogen III at position C-2 and C-7 to form precorrin-2 via precorrin-1. Then it catalyzes the NAD-dependent ring dehydrogenation of precorrin-2 to yield sirohydrochlorin. Finally, it catalyzes the ferrochelation of sirohydrochlorin to yield siroheme. The chain is Siroheme synthase from Zymomonas mobilis subsp. mobilis (strain ATCC 31821 / ZM4 / CP4).